The chain runs to 484 residues: Malonate-semialdehyde dehydrogenase 1 (484 aa).

Phe-153, Lys-177, Glu-180, Arg-181, Ser-230, and Thr-252 together coordinate NAD(+). The Nucleophile role is filled by Cys-285. Glu-385 serves as a coordination point for NAD(+).

The protein belongs to the aldehyde dehydrogenase family. IolA subfamily. In terms of assembly, homotetramer.

It carries out the reaction 3-oxopropanoate + NAD(+) + CoA + H2O = hydrogencarbonate + acetyl-CoA + NADH + H(+). It catalyses the reaction 2-methyl-3-oxopropanoate + NAD(+) + CoA + H2O = propanoyl-CoA + hydrogencarbonate + NADH + H(+). It participates in polyol metabolism; myo-inositol degradation into acetyl-CoA; acetyl-CoA from myo-inositol: step 7/7. Its function is as follows. Catalyzes the oxidation of malonate semialdehyde (MSA) and methylmalonate semialdehyde (MMSA) into acetyl-CoA and propanoyl-CoA, respectively. Is involved in a myo-inositol catabolic pathway. Bicarbonate, and not CO2, is the end-product of the enzymatic reaction. The protein is Malonate-semialdehyde dehydrogenase 1 of Geobacillus thermodenitrificans (strain NG80-2).